Here is a 245-residue protein sequence, read N- to C-terminus: Carbohydrate deacetylase (245 aa).

Residues H59 and H125 each contribute to the Mg(2+) site.

This sequence belongs to the YdjC deacetylase family. As to quaternary structure, homodimer. It depends on Mg(2+) as a cofactor.

In terms of biological role, probably catalyzes the deacetylation of acetylated carbohydrates an important step in the degradation of oligosaccharides. This is Carbohydrate deacetylase from Listeria monocytogenes serotype 4a (strain HCC23).